A 544-amino-acid chain; its full sequence is Elongator complex protein 3 (544 aa).

Residues 79-369 (RTASGIAVVA…YRIQRDIPMP (291 aa)) enclose the Radical SAM core domain. Residues Cys-96, Cys-106, and Cys-109 each contribute to the [4Fe-4S] cluster site. Residues Lys-161, 472 to 475 (ELHV), 495 to 497 (FGT), and Tyr-528 contribute to the acetyl-CoA site. In terms of domain architecture, N-acetyltransferase spans 393–544 (TKCRDIRARE…LDGPYMSKWL (152 aa)).

It belongs to the ELP3 family. As to quaternary structure, component of the elongator complex. [4Fe-4S] cluster serves as cofactor.

It is found in the cytoplasm. It carries out the reaction uridine(34) in tRNA + acetyl-CoA + S-adenosyl-L-methionine + H2O = 5-(carboxymethyl)uridine(34) in tRNA + 5'-deoxyadenosine + L-methionine + CoA + 2 H(+). It participates in tRNA modification; 5-methoxycarbonylmethyl-2-thiouridine-tRNA biosynthesis. Functionally, catalytic tRNA acetyltransferase subunit of the elongator complex which is required for multiple tRNA modifications, including mcm5U (5-methoxycarbonylmethyl uridine), mcm5s2U (5-methoxycarbonylmethyl-2-thiouridine), and ncm5U (5-carbamoylmethyl uridine). In the elongator complex, acts as a tRNA uridine(34) acetyltransferase, which mediates formation of carboxymethyluridine in the wobble base at position 34 in tRNAs. The protein is Elongator complex protein 3 of Schizosaccharomyces pombe (strain 972 / ATCC 24843) (Fission yeast).